The chain runs to 33 residues: Putative makorin-5 (33 aa).

This chain is Putative makorin-5 (MKRN9P), found in Homo sapiens (Human).